A 613-amino-acid chain; its full sequence is Myosin light chain kinase 2, skeletal/cardiac muscle (613 aa).

Residues 1–20 (MTTENGAVELGSQSLSTEQT) are compositionally biased toward polar residues. The interval 1 to 168 (MTTENGAVEL…RGSPAFLHSP (168 aa)) is disordered. Positions 32–55 (SEKEPSAPATEKDLSPPNAKKDPG) are enriched in basic and acidic residues. Residues 56 to 66 (APDPKNNPDPP) are compositionally biased toward pro residues. Residues 67–83 (SLKKDPAKAPGPEKKGD) are compositionally biased toward basic and acidic residues. A compositionally biased stretch (gly residues) spans 95–105 (SGEGDGGGGPA). Over residues 106-122 (EGSEGPPAALPLPTATA) the composition is skewed to low complexity. Basic and acidic residues predominate over residues 145–158 (KAGKKAAECREAGR). Phosphoserine occurs at positions 161, 167, and 169. The segment at 219 to 240 (EKKKEEAEKASGQAGQAKVQGD) is disordered. In terms of domain architecture, Protein kinase spans 302–557 (MNSKEALGGG…AEQCLAHPWL (256 aa)). ATP is bound by residues 308-316 (LGGGKFGAV) and Lys331. Asp423 serves as the catalytic Proton acceptor. A Phosphothreonine modification is found at Thr462. Residues 591-603 (IAVSAANRFKKIS) are calmodulin-binding.

It belongs to the protein kinase superfamily. CAMK Ser/Thr protein kinase family. As to quaternary structure, may interact with centrin.

Its subcellular location is the cytoplasm. The catalysed reaction is L-seryl-[myosin light chain] + ATP = O-phospho-L-seryl-[myosin light chain] + ADP + H(+). The enzyme catalyses L-threonyl-[myosin light chain] + ATP = O-phospho-L-threonyl-[myosin light chain] + ADP + H(+). Functionally, implicated in the level of global muscle contraction and cardiac function. Phosphorylates a specific serine in the N-terminus of a myosin light chain. The polypeptide is Myosin light chain kinase 2, skeletal/cardiac muscle (Mylk2) (Mus musculus (Mouse)).